The sequence spans 491 residues: Ketol-acid reductoisomerase (NADP(+)) (491 aa).

One can recognise a KARI N-terminal Rossmann domain in the interval 15 to 208 (AQLGKCRFMG…GGHRAGVLES (194 aa)). NADP(+) is bound by residues 45-48 (CGAQ), Arg68, Arg76, Ser78, and 108-110 (DKQ). The active site involves His132. Gly158 provides a ligand contact to NADP(+). KARI C-terminal knotted domains follow at residues 209–344 (SFVA…TAPQ) and 345–484 (YEGK…MTDM). Residues Asp217, Glu221, Glu389, and Glu393 each coordinate Mg(2+). Ser414 contacts substrate.

This sequence belongs to the ketol-acid reductoisomerase family. The cofactor is Mg(2+).

The catalysed reaction is (2R)-2,3-dihydroxy-3-methylbutanoate + NADP(+) = (2S)-2-acetolactate + NADPH + H(+). The enzyme catalyses (2R,3R)-2,3-dihydroxy-3-methylpentanoate + NADP(+) = (S)-2-ethyl-2-hydroxy-3-oxobutanoate + NADPH + H(+). Its pathway is amino-acid biosynthesis; L-isoleucine biosynthesis; L-isoleucine from 2-oxobutanoate: step 2/4. It functions in the pathway amino-acid biosynthesis; L-valine biosynthesis; L-valine from pyruvate: step 2/4. Involved in the biosynthesis of branched-chain amino acids (BCAA). Catalyzes an alkyl-migration followed by a ketol-acid reduction of (S)-2-acetolactate (S2AL) to yield (R)-2,3-dihydroxy-isovalerate. In the isomerase reaction, S2AL is rearranged via a Mg-dependent methyl migration to produce 3-hydroxy-3-methyl-2-ketobutyrate (HMKB). In the reductase reaction, this 2-ketoacid undergoes a metal-dependent reduction by NADPH to yield (R)-2,3-dihydroxy-isovalerate. The chain is Ketol-acid reductoisomerase (NADP(+)) from Escherichia coli (strain UTI89 / UPEC).